The chain runs to 409 residues: tRNA(Met) cytidine acetate ligase (409 aa).

ATP contacts are provided by residues 7–20 (VVEYNPMHNGHLYH), G102, N169, and R194.

It belongs to the TmcAL family.

The protein localises to the cytoplasm. The catalysed reaction is cytidine(34) in elongator tRNA(Met) + acetate + ATP = N(4)-acetylcytidine(34) in elongator tRNA(Met) + AMP + diphosphate. In terms of biological role, catalyzes the formation of N(4)-acetylcytidine (ac(4)C) at the wobble position of elongator tRNA(Met), using acetate and ATP as substrates. First activates an acetate ion to form acetyladenylate (Ac-AMP) and then transfers the acetyl group to tRNA to form ac(4)C34. This chain is tRNA(Met) cytidine acetate ligase, found in Clostridium botulinum (strain ATCC 19397 / Type A).